A 362-amino-acid polypeptide reads, in one-letter code: Aminomethyltransferase (362 aa).

This sequence belongs to the GcvT family. The glycine cleavage system is composed of four proteins: P, T, L and H.

The enzyme catalyses N(6)-[(R)-S(8)-aminomethyldihydrolipoyl]-L-lysyl-[protein] + (6S)-5,6,7,8-tetrahydrofolate = N(6)-[(R)-dihydrolipoyl]-L-lysyl-[protein] + (6R)-5,10-methylene-5,6,7,8-tetrahydrofolate + NH4(+). In terms of biological role, the glycine cleavage system catalyzes the degradation of glycine. In Listeria welshimeri serovar 6b (strain ATCC 35897 / DSM 20650 / CCUG 15529 / CIP 8149 / NCTC 11857 / SLCC 5334 / V8), this protein is Aminomethyltransferase.